Reading from the N-terminus, the 383-residue chain is MVQIFKFLLKSSKSTGRAHFRPTFLDTLRLAVRGGHGGNGLPKYGGVGGQGGCVYLVAKEGLTLRKVVQGLKDKRVAASSGEDSSKASIFGRRGADQRIEVPVGVQVYDDQQKLIADLDEHEATCIVAGGGTGGCTATNFLGRPGENRTVNLDLKLIADVGLVGFPNAGKSTLLKAVSNAKPKIAAYPFTTIRPQIGTIEYRDLRSITVADLPGLIEGAHANFGMGHKFLKHIERTRLLVFMVDIFGFQLSPKHPHRDCLANVYALNKELELYDPSLLEKPSVLLLNKMDKEGAHEIFTKVKPLVSDLASGLEQCPEELRPKQVLNFDSIVPISAMNSSKITQVKSQLRRTLVRLAEKQFLADEDQVKEKLRQRVGVVGPKIT.

In terms of domain architecture, Obg spans 22–157 (PTFLDTLRLA…RTVNLDLKLI (136 aa)). Residues 158-353 (ADVGLVGFPN…VKSQLRRTLV (196 aa)) enclose the OBG-type G domain. GTP is bound by residues 164–171 (GFPNAGKS), 211–215 (DLPGL), and 287–290 (NKMD).

The protein belongs to the TRAFAC class OBG-HflX-like GTPase superfamily. OBG GTPase family.

Its subcellular location is the nucleus. It is found in the nucleolus. Its function is as follows. May be involved in the ribosome maturation process. This chain is GTP-binding protein 10 homolog, found in Drosophila melanogaster (Fruit fly).